Here is a 1034-residue protein sequence, read N- to C-terminus: MERARRLAMLGRLVSQTKHNPSISSPALCSPSRYVSSLSPYVCGGTNVRSDRNLNGFGSQVRTISVEALKPSDTFPRRHNSATPEEQTKMAEFVGFSNLDSLIDATVPKSIRLDSMKYSKFDEGLTESQMIAHMQDLASKNKIFKSFIGMGYYNTSVPTVILRNIMENPGWYTQYTPYQAEIAQGRLESLLNFQTMITDLTGLPMSNASLLDEGTAAAEAMAMCNNIQKGKKKTFIIASNCHPQTIDICKTRADGFDLKVVTSDLKDFDYSSGDVCGVLVQYPGTEGELLDYSEFIKNAHANGVKVVMASDLLALTILKPPGELGADIVVGSAQRFGVPMGYGGPHAAFLATSQEYKRMMPGRIIGVSVDSSGKPALRMAMQTREQHIRRDKATSNICTAQALLANMAAMYGVYHGPEGLKTIAKRVHGLAGTFAAGLKKLGTVQVQDLPFFDTVKVTCADSKAIAEEACKHKMNLRIVDKNTITVAFDETTTIEDVDTLFKVFALGKPVPFTAASIAPEVQDAIPSGLVRETPYLTHPIFNMYHTEHELLRYISKLQSKDLSLCHSMIPLGSCTMKLNATTEMMPVTWPAFADIHPFAPTEQAQGYQEMFKNLGDLLCTITGFDSFSLQPNAGAAGEYAGLMVIRAYHMARGDHHRNVCIIPVSAHGTNPASAAMCGMKIITVGTDSKGNINIEELRKAAEANKENLSALMVTYPSTHGVYEEGIDEICKIIHDNGGQVYMDGANMNAQVGLTSPGWIGADVCHLNLHKTFCIPHGGGGPGMGPIGVKKHLAPYLPSHPVVPTGGIPAPEESQPLGTIAAAPWGSALILPISYTYIAMMGSQGITNASKIAILNANYMAKRLENHYPILFRGVNGTVAHEFIVDLRPLKTTAGIEPEDVAKRLIDYGFHGPTMSWPVPGTLMIEPTESESKAELDRFCDALISIRQEIAEIEKGNVDFNNNVIKGAPHPPQLLMADKWTKPYSREYAAYPAPWLRAAKFWPTTCRVDNVYGDRNLICTLQPPQEYEEKAEATA.

The N-terminal 63 residues, 1–63 (MERARRLAML…LNGFGSQVRT (63 aa)), are a transit peptide targeting the mitochondrion. K770 carries the N6-(pyridoxal phosphate)lysine modification.

The protein belongs to the GcvP family. As to quaternary structure, homodimer. The glycine cleavage system is composed of four proteins: P, T, L and H. The cofactor is pyridoxal 5'-phosphate.

The protein localises to the mitochondrion. It carries out the reaction N(6)-[(R)-lipoyl]-L-lysyl-[glycine-cleavage complex H protein] + glycine + H(+) = N(6)-[(R)-S(8)-aminomethyldihydrolipoyl]-L-lysyl-[glycine-cleavage complex H protein] + CO2. Functionally, the glycine cleavage system catalyzes the degradation of glycine. The P protein binds the alpha-amino group of glycine through its pyridoxal phosphate cofactor; CO(2) is released and the remaining methylamine moiety is then transferred to the lipoamide cofactor of the H protein. This chain is Glycine dehydrogenase (decarboxylating), mitochondrial (GDCSP), found in Flaveria anomala (Yellowtops).